The primary structure comprises 491 residues: MPVLIATVGVVAVAALVIAIFVVIKFGRAPRVDAGNVRQPSGMSGPDAAAAEAEIREARSELERREQRLAEREARLDAEHERLAARERQLAELEEKLGRLQAELAQVAEERRLLLERTAGLTAEAAKAELVALIENQAKRDAALTVREIERAATEEAERRAREIVTTAIQRVASEQTAESVVSVVHLPGDEMKGRIIGREGRNIRAFESITGVNLIIDDTPEAVLLSCFDPVRREIARVALERLVDDGRIHPLRIEEVYEASRLEVERLCQRAAEDALLAVGITGMHPELVALLGRLRYRTSYGQNVLKHLVETAHLAGVMAAELHIDPQLVKRGALLHDIGKALSHEVEGSHALIGAELARRYGEHEDVVHAIEAHHNEVEPRTIEAVLTQAADAISGGRPGARRESLESYVQRLERLEEIASAYEGVEKVFAMQAGRELRVMVLPDVVDDIQAQVIARDIAKQIETELTYPGQIRVTVVRETRASEFAH.

The helical transmembrane segment at 4 to 24 (LIATVGVVAVAALVIAIFVVI) threads the bilayer. In terms of domain architecture, KH spans 181 to 247 (VVSVVHLPGD…RVALERLVDD (67 aa)). One can recognise an HD domain in the interval 307-400 (VLKHLVETAH…TQAADAISGG (94 aa)).

The protein belongs to the RNase Y family.

It is found in the cell membrane. Its function is as follows. Endoribonuclease that initiates mRNA decay. This chain is Ribonuclease Y, found in Acidothermus cellulolyticus (strain ATCC 43068 / DSM 8971 / 11B).